Reading from the N-terminus, the 311-residue chain is MQENQQITKKEQYNLNKLQKRLRRNVGEAIADFNMIEEGDRIMVCLSGGKDSYTMLEILRNLQQSAPINFSLVAVNLDQKQPGFPEHVLPEYLEKLGVEYKIVEENTYGIVKEKIPEGKTTCSLCSRLRRGILYRTATELGATKIALGHHRDDILQTLFLNMFYGGKMKGMPPKLMSDDGKHIVIRPLAYCREKDIQRFADAKAFPIIPCNLCGSQPNLQRQVIADMLRDWDKRYPGRIETMFSAMQNVVPSHLCDTNLFDFKGITHGSEVVNGGDLAFDREEIPLQPACWQPEEDENQLDELRLNVVEVK.

The short motif at 47-52 (SGGKDS) is the PP-loop motif element. Residues Cys-122, Cys-125, and Cys-213 each coordinate [4Fe-4S] cluster.

Belongs to the TtcA family. As to quaternary structure, homodimer. The cofactor is Mg(2+). Requires [4Fe-4S] cluster as cofactor.

Its subcellular location is the cytoplasm. The enzyme catalyses cytidine(32) in tRNA + S-sulfanyl-L-cysteinyl-[cysteine desulfurase] + AH2 + ATP = 2-thiocytidine(32) in tRNA + L-cysteinyl-[cysteine desulfurase] + A + AMP + diphosphate + H(+). It functions in the pathway tRNA modification. In terms of biological role, catalyzes the ATP-dependent 2-thiolation of cytidine in position 32 of tRNA, to form 2-thiocytidine (s(2)C32). The sulfur atoms are provided by the cysteine/cysteine desulfurase (IscS) system. The chain is tRNA-cytidine(32) 2-sulfurtransferase from Escherichia coli (strain K12 / MC4100 / BW2952).